Here is a 1418-residue protein sequence, read N- to C-terminus: Protein ced-11 (1418 aa).

7 helical membrane-spanning segments follow: residues 617–637 (FPIF…IIPV), 755–775 (YWLS…SVVL), 782–802 (LWDT…CFVL), 818–838 (VFDV…KVFP), 856–876 (VVSA…YIPL), 898–918 (FLFM…AVVF), and 986–1006 (IVIE…FAFF).

The protein resides in the membrane. Plays a major role in programmed cell death. This Caenorhabditis elegans protein is Protein ced-11 (ced-11).